A 116-amino-acid chain; its full sequence is Photosystem II reaction center Psb28 protein (116 aa).

It belongs to the Psb28 family. Part of the photosystem II complex.

Its subcellular location is the plastid. It localises to the chloroplast thylakoid membrane. The chain is Photosystem II reaction center Psb28 protein from Guillardia theta (Cryptophyte).